A 503-amino-acid polypeptide reads, in one-letter code: AMP phosphorylase (503 aa).

AMP contacts are provided by residues G168, 194–199 (SRAITS), and T203. D256 acts as the Proton donor in catalysis. AMP-binding residues include S264 and K288.

Belongs to the thymidine/pyrimidine-nucleoside phosphorylase family. Type 2 subfamily.

The enzyme catalyses AMP + phosphate = alpha-D-ribose 1,5-bisphosphate + adenine. The catalysed reaction is CMP + phosphate = cytosine + alpha-D-ribose 1,5-bisphosphate. It catalyses the reaction UMP + phosphate = alpha-D-ribose 1,5-bisphosphate + uracil. Catalyzes the conversion of AMP and phosphate to adenine and ribose 1,5-bisphosphate (R15P). Exhibits phosphorylase activity toward CMP and UMP in addition to AMP. Functions in an archaeal AMP degradation pathway, together with R15P isomerase and RubisCO. The sequence is that of AMP phosphorylase (deoA) from Pyrococcus abyssi (strain GE5 / Orsay).